Reading from the N-terminus, the 461-residue chain is MILSTQRLGRFMSPAPTPAPDAKPRTVLGYGSYAESLRIGEILRKETVGGALLVAAAVIALIWANSPVSDSYFALRDYKIGYEPWHLELSLGAWAADGLLAIFFFLVGLELKREFVAGDLRQLNKSIVPVAAAAGGVLVPALIYAAVNIYSPETLRGWAIPTATDIAFAVAVLAIIGSHLPSALRIFLLTLAVVDDLIAISIIAFFYSSDIQAAPLLLALIPLALYAFLAQRYRRFFGAHFMAAWAILLPLGIVTWALVHASGIHATVAGVLLGFAVPVLRSKASGGPEAGPGLAEIFEHRFRPISAGVAVPIFAFFSAGVAVGGWEGLGSALADPVAIGIIMALVLGKPIGIMGTTWILTKATRARLDGSFKWIDVFGVSLLAGIGFTVSLLVAELSFGHGSLHDDHAKVGILAASLLAAILATVVLRARNRQYRRAEELEKVDSDQDGIPDVYQHESRG.

A disordered region spans residues 1–23; that stretch reads MILSTQRLGRFMSPAPTPAPDAK. Helical transmembrane passes span 48 to 68, 89 to 109, 127 to 147, 157 to 177, 186 to 206, 211 to 231, 236 to 256, 257 to 277, 305 to 325, 339 to 359, 374 to 394, and 408 to 428; these read VGGA…NSPV, LSLG…LVGL, IVPV…YAAV, GWAI…AIIG, IFLL…IAFF, IQAA…FLAQ, FFGA…IVTW, ALVH…GFAV, ISAG…AVGG, IGII…TTWI, WIDV…SLLV, and HAKV…TVVL.

It belongs to the NhaA Na(+)/H(+) (TC 2.A.33) antiporter family.

It is found in the cell membrane. The catalysed reaction is Na(+)(in) + 2 H(+)(out) = Na(+)(out) + 2 H(+)(in). Na(+)/H(+) antiporter that extrudes sodium in exchange for external protons. This Arthrobacter sp. (strain FB24) protein is Na(+)/H(+) antiporter NhaA.